A 377-amino-acid chain; its full sequence is Cytochrome b (377 aa).

The next 4 membrane-spanning stretches (helical) occupy residues 36–56, 80–102, 115–135, and 181–201; these read WGSLLGIFLIIPIITGLFLAM, WLIRFIHVNGASFFFIFLYLHMA, VWLIGCTIYVVSMATAFMGYI, and FFVLHFILPFIILALSIIHLI. Residues histidine 86 and histidine 100 each contribute to the heme b site. Residues histidine 185 and histidine 199 each coordinate heme b. Histidine 204 contributes to the a ubiquinone binding site. 4 consecutive transmembrane segments (helical) span residues 227-247, 291-311, 326-346, and 354-374; these read YSSKDLMFLLLLMMIMMVIIF, LGGVLTMVFSILILFLLPFIS, LFWSFVVNMLILTWIGGMPVV, and LTSTFLYFIIILIYSNSFLMI.

It belongs to the cytochrome b family. As to quaternary structure, the main subunits of complex b-c1 are: cytochrome b, cytochrome c1 and the Rieske protein. Requires heme b as cofactor.

It localises to the mitochondrion inner membrane. Functionally, component of the ubiquinol-cytochrome c reductase complex (complex III or cytochrome b-c1 complex) that is part of the mitochondrial respiratory chain. The b-c1 complex mediates electron transfer from ubiquinol to cytochrome c. Contributes to the generation of a proton gradient across the mitochondrial membrane that is then used for ATP synthesis. This chain is Cytochrome b (mt:Cyt-b), found in Myzostoma seymourcollegiorum (Polychaete worm).